The primary structure comprises 418 residues: Gamma-glutamyl phosphate reductase (418 aa).

The protein belongs to the gamma-glutamyl phosphate reductase family.

The protein resides in the cytoplasm. It carries out the reaction L-glutamate 5-semialdehyde + phosphate + NADP(+) = L-glutamyl 5-phosphate + NADPH + H(+). It participates in amino-acid biosynthesis; L-proline biosynthesis; L-glutamate 5-semialdehyde from L-glutamate: step 2/2. Functionally, catalyzes the NADPH-dependent reduction of L-glutamate 5-phosphate into L-glutamate 5-semialdehyde and phosphate. The product spontaneously undergoes cyclization to form 1-pyrroline-5-carboxylate. The protein is Gamma-glutamyl phosphate reductase of Clostridium acetobutylicum (strain ATCC 824 / DSM 792 / JCM 1419 / IAM 19013 / LMG 5710 / NBRC 13948 / NRRL B-527 / VKM B-1787 / 2291 / W).